Consider the following 269-residue polypeptide: Tryptophan synthase alpha chain (269 aa).

Catalysis depends on proton acceptor residues glutamate 49 and aspartate 60.

Belongs to the TrpA family. As to quaternary structure, tetramer of two alpha and two beta chains.

It carries out the reaction (1S,2R)-1-C-(indol-3-yl)glycerol 3-phosphate + L-serine = D-glyceraldehyde 3-phosphate + L-tryptophan + H2O. The protein operates within amino-acid biosynthesis; L-tryptophan biosynthesis; L-tryptophan from chorismate: step 5/5. Its function is as follows. The alpha subunit is responsible for the aldol cleavage of indoleglycerol phosphate to indole and glyceraldehyde 3-phosphate. The polypeptide is Tryptophan synthase alpha chain (Pseudomonas putida (strain ATCC 47054 / DSM 6125 / CFBP 8728 / NCIMB 11950 / KT2440)).